The chain runs to 190 residues: Peptidyl-tRNA hydrolase (190 aa).

F14 is a binding site for tRNA. The Proton acceptor role is filled by H19. The tRNA site is built by M64, N66, and N112.

The protein belongs to the PTH family. In terms of assembly, monomer.

The protein resides in the cytoplasm. The enzyme catalyses an N-acyl-L-alpha-aminoacyl-tRNA + H2O = an N-acyl-L-amino acid + a tRNA + H(+). Hydrolyzes ribosome-free peptidyl-tRNAs (with 1 or more amino acids incorporated), which drop off the ribosome during protein synthesis, or as a result of ribosome stalling. Its function is as follows. Catalyzes the release of premature peptidyl moieties from peptidyl-tRNA molecules trapped in stalled 50S ribosomal subunits, and thus maintains levels of free tRNAs and 50S ribosomes. This Staphylococcus haemolyticus (strain JCSC1435) protein is Peptidyl-tRNA hydrolase.